Reading from the N-terminus, the 486-residue chain is Lipase 1 (486 aa).

A disulfide bridge links Cys-58 with Cys-82. Residue Ser-193 is the Acyl-ester intermediate of the active site. Asp-303 (charge relay system) is an active-site residue. Asn-332 carries N-linked (GlcNAc...) asparagine glycosylation. Catalysis depends on His-392, which acts as the Charge relay system.

The protein belongs to the type-B carboxylesterase/lipase family.

It carries out the reaction a triacylglycerol + H2O = a diacylglycerol + a fatty acid + H(+). The sequence is that of Lipase 1 (LIP1) from Yarrowia lipolytica (strain CLIB 122 / E 150) (Yeast).